A 104-amino-acid chain; its full sequence is Phosphate metabolism protein 6 (104 aa).

A helical transmembrane segment spans residues 76–96; the sequence is IIVIIIVLLLYSLTMVGLFYV.

It is found in the vacuole membrane. This chain is Phosphate metabolism protein 6 (PHM6), found in Saccharomyces cerevisiae (strain ATCC 204508 / S288c) (Baker's yeast).